The primary structure comprises 673 residues: UvrABC system protein B (673 aa).

The region spanning 26 to 414 is the Helicase ATP-binding domain; the sequence is ANFEAGLAKQ…AGEITELVVR (389 aa). 39-46 is a binding site for ATP; that stretch reads GVTGSGKT. A Beta-hairpin motif is present at residues 92-115; sequence YYDYYQPEAYVPSSDTFIEKDSSI. In terms of domain architecture, Helicase C-terminal spans 431–597; that stretch reads QVDDLMSEVH…SVARPISDIM (167 aa). Residues 601–626 form a disordered region; it reads REDAAEKKAGKGRSKSRQVAEEPADY. In terms of domain architecture, UVR spans 635 to 670; that stretch reads AGKLKALEQKMYQHAKDLEFEAAAQIRDQILKLKAA.

This sequence belongs to the UvrB family. As to quaternary structure, forms a heterotetramer with UvrA during the search for lesions. Interacts with UvrC in an incision complex.

It is found in the cytoplasm. Its function is as follows. The UvrABC repair system catalyzes the recognition and processing of DNA lesions. A damage recognition complex composed of 2 UvrA and 2 UvrB subunits scans DNA for abnormalities. Upon binding of the UvrA(2)B(2) complex to a putative damaged site, the DNA wraps around one UvrB monomer. DNA wrap is dependent on ATP binding by UvrB and probably causes local melting of the DNA helix, facilitating insertion of UvrB beta-hairpin between the DNA strands. Then UvrB probes one DNA strand for the presence of a lesion. If a lesion is found the UvrA subunits dissociate and the UvrB-DNA preincision complex is formed. This complex is subsequently bound by UvrC and the second UvrB is released. If no lesion is found, the DNA wraps around the other UvrB subunit that will check the other stand for damage. The sequence is that of UvrABC system protein B from Xanthomonas campestris pv. campestris (strain 8004).